The sequence spans 307 residues: MSLPKIAISVGDINGVGIEIALKSHDEIKNICSPIYFINNELLNSAANILKFTVPNDFEIFECGSSFNIKPGRVSKKSGKFSFVSFENAILYTQNKRAQALVTMPINKESWKKAGVPYVGHTDALGKYFGKNAIMMLGCEELFVALYTDHLALKDVSAKIKAKNLALFLVDFYNSSKFENIGVLGFNPHASDNETIGGKEEKEIIKAIKSANNRLKKEVFTGPLVPDAAFTKSSLKRCNRLVSMYHDVGLAPLKALYFDKSINVSLNLPIVRTSVDHGTAFDIAYKGKAETKSYIEAIKFAIKLCDY.

Positions 121 and 122 each coordinate substrate. His-150, His-189, and His-246 together coordinate a divalent metal cation. Substrate is bound by residues Lys-254, Asn-263, and Arg-272.

It belongs to the PdxA family. As to quaternary structure, homodimer. Zn(2+) is required as a cofactor. The cofactor is Mg(2+). Co(2+) serves as cofactor.

The protein resides in the cytoplasm. The catalysed reaction is 4-(phosphooxy)-L-threonine + NAD(+) = 3-amino-2-oxopropyl phosphate + CO2 + NADH. The protein operates within cofactor biosynthesis; pyridoxine 5'-phosphate biosynthesis; pyridoxine 5'-phosphate from D-erythrose 4-phosphate: step 4/5. Catalyzes the NAD(P)-dependent oxidation of 4-(phosphooxy)-L-threonine (HTP) into 2-amino-3-oxo-4-(phosphooxy)butyric acid which spontaneously decarboxylates to form 3-amino-2-oxopropyl phosphate (AHAP). This chain is 4-hydroxythreonine-4-phosphate dehydrogenase, found in Campylobacter fetus subsp. fetus (strain 82-40).